A 498-amino-acid chain; its full sequence is Protein adenylyltransferase Fic (498 aa).

A helical membrane pass occupies residues 43-63 (FAFLAFLAGSFLAFSLHALIS). TPR repeat units follow at residues 126 to 159 (ALSSLRLAQDMYMAGKDDKAARLFEHALALAPRH) and 160 to 194 (PEVLLRYGEFLEHNQRNIVLADQYYFQALTINPSH). Positions 251-256 (SVGIEG) match the Inhibitory (S/T)XXXE(G/N) motif motif. Residues Glu-255 and 336–339 (VGGH) contribute to the ATP site. Residues 305–440 (ITIKDILELH…IRPFVRFIAD (136 aa)) enclose the Fido domain. The active site involves His-383. Residues 387–394 (DGNGRTSR), 419–420 (YY), and Asn-427 contribute to the ATP site.

This sequence belongs to the fic family. In terms of assembly, homodimer.

The protein localises to the membrane. The catalysed reaction is L-tyrosyl-[protein] + ATP = O-(5'-adenylyl)-L-tyrosyl-[protein] + diphosphate. It carries out the reaction L-threonyl-[protein] + ATP = 3-O-(5'-adenylyl)-L-threonyl-[protein] + diphosphate. It catalyses the reaction 3-O-(5'-adenylyl)-L-threonyl-[protein] + H2O = L-threonyl-[protein] + AMP + H(+). Its activity is regulated as follows. The side chain of Glu-255 determines which of the two opposing activities (AMPylase or de-AMPylase) will take place. In response to endoplasmic reticulum stress, mediates de-AMPylase activity. Adenylyltransferase activity is inhibited by the inhibitory helix present at the N-terminus: Glu-255 binds ATP and competes with ATP-binding at Arg-394, thereby preventing adenylyltransferase activity. In unstressed cells, disengagement of Glu-255 promotes adenylyltransferase activity. Activation dissociates ATP-binding from Glu-255, allowing ordered binding of the entire ATP moiety with the alpha-phosphate in an orientation that is productive for accepting an incoming target hydroxyl side chain. Protein that can both mediate the addition of adenosine 5'-monophosphate (AMP) to specific residues of target proteins (AMPylation), and the removal of the same modification from target proteins (de-AMPylation), depending on the context. The side chain of Glu-255 determines which of the two opposing activities (AMPylase or de-AMPylase) will take place. Acts as a key regulator of the unfolded protein response (UPR) by mediating AMPylation or de-AMPylation of Hsc70-3/BiP. In unstressed cells, acts as an adenylyltransferase by mediating AMPylation of Hsc70-3/BiP at 'Thr-518', thereby inactivating it. In response to endoplasmic reticulum stress, acts as a phosphodiesterase by mediating removal of ATP (de-AMPylation) from Hsc70-3/BiP at 'Thr-518', leading to restore HSPA5/BiP activity. This Drosophila willistoni (Fruit fly) protein is Protein adenylyltransferase Fic.